We begin with the raw amino-acid sequence, 90 residues long: UPF0335 protein RPD_1405 (90 aa).

This sequence belongs to the UPF0335 family.

The polypeptide is UPF0335 protein RPD_1405 (Rhodopseudomonas palustris (strain BisB5)).